A 158-amino-acid polypeptide reads, in one-letter code: ATP synthase subunit delta (158 aa).

It belongs to the ATPase delta chain family. As to quaternary structure, F-type ATPases have 2 components, F(1) - the catalytic core - and F(0) - the membrane proton channel. F(1) has five subunits: alpha(3), beta(3), gamma(1), delta(1), epsilon(1). F(0) has three main subunits: a(1), b(2) and c(10-14). The alpha and beta chains form an alternating ring which encloses part of the gamma chain. F(1) is attached to F(0) by a central stalk formed by the gamma and epsilon chains, while a peripheral stalk is formed by the delta and b chains.

It is found in the cell membrane. Functionally, f(1)F(0) ATP synthase produces ATP from ADP in the presence of a proton or sodium gradient. F-type ATPases consist of two structural domains, F(1) containing the extramembraneous catalytic core and F(0) containing the membrane proton channel, linked together by a central stalk and a peripheral stalk. During catalysis, ATP synthesis in the catalytic domain of F(1) is coupled via a rotary mechanism of the central stalk subunits to proton translocation. This protein is part of the stalk that links CF(0) to CF(1). It either transmits conformational changes from CF(0) to CF(1) or is implicated in proton conduction. This is ATP synthase subunit delta from Roseiflexus castenholzii (strain DSM 13941 / HLO8).